Here is a 98-residue protein sequence, read N- to C-terminus: NADH-ubiquinone oxidoreductase chain 4L (98 aa).

3 helical membrane passes run 2–22 (LSIS…MLMF), 29–49 (SLLC…LIIL), and 61–81 (ILLL…LVMV).

The protein belongs to the complex I subunit 4L family. Core subunit of respiratory chain NADH dehydrogenase (Complex I) which is composed of 45 different subunits.

The protein resides in the mitochondrion inner membrane. It catalyses the reaction a ubiquinone + NADH + 5 H(+)(in) = a ubiquinol + NAD(+) + 4 H(+)(out). Core subunit of the mitochondrial membrane respiratory chain NADH dehydrogenase (Complex I) which catalyzes electron transfer from NADH through the respiratory chain, using ubiquinone as an electron acceptor. Part of the enzyme membrane arm which is embedded in the lipid bilayer and involved in proton translocation. The protein is NADH-ubiquinone oxidoreductase chain 4L (MT-ND4L) of Microcebus ravelobensis (Golden-brown mouse lemur).